A 286-amino-acid chain; its full sequence is 2-hydroxy-6-oxo-6-phenylhexa-2,4-dienoate hydrolase (286 aa).

Residues 42–43, N51, N111, S180, and R190 contribute to the substrate site; that span reads GG. H265 functions as the Proton acceptor in the catalytic mechanism. W266 serves as a coordination point for substrate.

It belongs to the AB hydrolase superfamily. BphD family. As to quaternary structure, homodimer.

It catalyses the reaction 2,6-dioxo-6-phenylhexa-3-enoate + H2O = 2-oxopent-4-enoate + benzoate + H(+). It functions in the pathway xenobiotic degradation; biphenyl degradation; 2-hydroxy-2,4-pentadienoate and benzoate from biphenyl: step 4/4. Functionally, catalyzes an unusual C-C bond hydrolysis of 2-hydroxy-6-oxo-6-phenylhexa-2,4-dienoic acid (HOPDA) to produce benzoic acid and 2-hydroxy-2,4-pentadienoic acid (HPD). This chain is 2-hydroxy-6-oxo-6-phenylhexa-2,4-dienoate hydrolase, found in Polaromonas naphthalenivorans (strain CJ2).